The following is a 137-amino-acid chain: Large ribosomal subunit protein uL16 (137 aa).

This sequence belongs to the universal ribosomal protein uL16 family. As to quaternary structure, part of the 50S ribosomal subunit.

Functionally, binds 23S rRNA and is also seen to make contacts with the A and possibly P site tRNAs. This Nitratidesulfovibrio vulgaris (strain ATCC 29579 / DSM 644 / CCUG 34227 / NCIMB 8303 / VKM B-1760 / Hildenborough) (Desulfovibrio vulgaris) protein is Large ribosomal subunit protein uL16.